We begin with the raw amino-acid sequence, 327 residues long: Undecaprenyl-phosphate 4-deoxy-4-formamido-L-arabinose transferase (327 aa).

Topologically, residues 1-235 (MFDAAPIKKV…TCLTTTPLRL (235 aa)) are cytoplasmic. A helical transmembrane segment spans residues 236-256 (LSLLGSVIAIGGFSLSVLLIV). Residues 257–269 (LRLALGPQWAAEG) lie on the Periplasmic side of the membrane. Residues 270 to 290 (VFMLFAVLFTFIGAQFIGMGL) traverse the membrane as a helical segment. Over 291–327 (LGEYIGRIYNDVRARPRYFVQQVIYPESTSFTEESHQ) the chain is Cytoplasmic.

Belongs to the glycosyltransferase 2 family.

It is found in the cell inner membrane. It catalyses the reaction UDP-4-deoxy-4-formamido-beta-L-arabinose + di-trans,octa-cis-undecaprenyl phosphate = 4-deoxy-4-formamido-alpha-L-arabinopyranosyl di-trans,octa-cis-undecaprenyl phosphate + UDP. It participates in glycolipid biosynthesis; 4-amino-4-deoxy-alpha-L-arabinose undecaprenyl phosphate biosynthesis; 4-amino-4-deoxy-alpha-L-arabinose undecaprenyl phosphate from UDP-4-deoxy-4-formamido-beta-L-arabinose and undecaprenyl phosphate: step 1/2. The protein operates within bacterial outer membrane biogenesis; lipopolysaccharide biosynthesis. Catalyzes the transfer of 4-deoxy-4-formamido-L-arabinose from UDP to undecaprenyl phosphate. The modified arabinose is attached to lipid A and is required for resistance to polymyxin and cationic antimicrobial peptides. In Salmonella paratyphi A (strain ATCC 9150 / SARB42), this protein is Undecaprenyl-phosphate 4-deoxy-4-formamido-L-arabinose transferase.